The sequence spans 173 residues: Putative pre-16S rRNA nuclease (173 aa).

The protein belongs to the YqgF nuclease family.

The protein localises to the cytoplasm. Functionally, could be a nuclease involved in processing of the 5'-end of pre-16S rRNA. This chain is Putative pre-16S rRNA nuclease, found in Rhodopirellula baltica (strain DSM 10527 / NCIMB 13988 / SH1).